The following is a 171-amino-acid chain: RNA pyrophosphohydrolase (171 aa).

One can recognise a Nudix hydrolase domain in the interval 6-149 (GFRPNVGIIL…KREVYRRALK (144 aa)). Residues 39–60 (GGIKESESAEQALYRELQEEVG) carry the Nudix box motif.

This sequence belongs to the Nudix hydrolase family. RppH subfamily. A divalent metal cation is required as a cofactor.

Accelerates the degradation of transcripts by removing pyrophosphate from the 5'-end of triphosphorylated RNA, leading to a more labile monophosphorylated state that can stimulate subsequent ribonuclease cleavage. This Teredinibacter turnerae (strain ATCC 39867 / T7901) protein is RNA pyrophosphohydrolase.